The chain runs to 313 residues: Chemotaxis protein CheV2 (313 aa).

One can recognise a CheW-like domain in the interval 16-172 (EAQFLCFRLD…VEKMISDVFP (157 aa)). Residues 193 to 313 (LILIAEDSLS…IHEMLKKTLS (121 aa)) form the Response regulatory domain. At D246 the chain carries 4-aspartylphosphate.

In terms of processing, phosphorylated; probably by transfer of CheAY phosphate group.

Plays a role in chemotaxis signal transduction system in order to colonize the host stomach. May act as a phosphate sink to control the flow of phosphate to CheAY. The chain is Chemotaxis protein CheV2 from Helicobacter pylori (strain ATCC 700392 / 26695) (Campylobacter pylori).